Consider the following 388-residue polypeptide: GTPase Obg (388 aa).

In terms of domain architecture, Obg spans 4–162; sequence SNFVDYVKIY…MTVIMELKLL (159 aa). Residues 163 to 329 enclose the OBG-type G domain; sequence ADVGLVGFPN…LKDILWEELN (167 aa). GTP contacts are provided by residues 169 to 176, 194 to 198, 216 to 219, 283 to 286, and 310 to 312; these read GFPNAGKS, FTTLE, DIPG, TKSD, and SSV. 2 residues coordinate Mg(2+): S176 and T196. The tract at residues 352 to 388 is disordered; that stretch reads LKDMGEDEELDYEYEEDADDEDDDLDYEYEEEDWEEK. The span at 356-388 shows a compositional bias: acidic residues; it reads GEDEELDYEYEEDADDEDDDLDYEYEEEDWEEK.

This sequence belongs to the TRAFAC class OBG-HflX-like GTPase superfamily. OBG GTPase family. Monomer. Requires Mg(2+) as cofactor.

The protein localises to the cytoplasm. An essential GTPase which binds GTP, GDP and possibly (p)ppGpp with moderate affinity, with high nucleotide exchange rates and a fairly low GTP hydrolysis rate. Plays a role in control of the cell cycle, stress response, ribosome biogenesis and in those bacteria that undergo differentiation, in morphogenesis control. The chain is GTPase Obg from Bacteroides thetaiotaomicron (strain ATCC 29148 / DSM 2079 / JCM 5827 / CCUG 10774 / NCTC 10582 / VPI-5482 / E50).